The sequence spans 4652 residues: MERWAAAAACTLLLAFAACLAPASGRECLGNEFRCSNGHCITESWRCDGTRDCLDGSDEIGCPPSTCGSTQFHCENEDVCIPLYWVCDGEEDCSNGADEHQRCPPGRTCSSHHFTCTNGECIPVEYRCDHSTDCLDGTDEINCRYPVCQQQTCHNGACYNTSQRCDGEIDCRDASDELNCTQRCLRNEFQCGSGECIPRDYVCDHDPDCSDSSDEHSCSVYQPCKGNEFACSNGFCINQNWVCDGMADCLDNSDEDGCESSIIRTHECYPNEWACPEDGKCIPLSRVCDGIADCPRGGDENKQGRVCDVNMCPSLGCEYQCHKSPSGGTCNCPPGFIVNKNNTRSCVDFNDCQIWGICDHFCEDRIGHHQCFCAEGYVLEHEQHCRANSSSGQAFVIFSNGRNLLLGDIQGQSFEYLVRSQNRGSPVGVDFHYRLSKVFWTDTMQNKVFSLDIDGLVIREVLSVSIEDPENLAVDWINNKLYIVETNVNRIDLANLDGSHRITLITENLGRPRGIALDPTVGYLFFSDWQSISGQPKIERAYMDGSNRKDLVKIKLGWPGGITLDLVAKRVYWVDARFDYIETVTYDGTQRKTVLQGGSNIPHPFGITLFEDNLFFTDWTKFSVMKANKFTETNPRVYFRSSTRPFGVTVYHAIRQPSVRNPCGNNNGGCEHICVLSHRTDNGGLGYRCKCKLGYIPGLDDYSCVATKQFLFFSTDVAVRGIPLTPSNQKDVILPVTGSPSVFVGIDFDAKENAIFFSDTSKDMIFRQKINGTGREIITANRVPSVESLSFDWISRNLYWTDASYRSVTVMRLADKSRRTIVQNLNNPRSIVVHPIAGYIFFTDWFRPAKILRAWSDGSHMLPIVNTTLGWPNGLAIDWGSSRLYWVDAFLDKIEHTTFDGLDRRALNHLQQMTHPFGLTVFGEYVYFTDWRQRSIVRVRKTDGGEMTILRNGVGNVMRVKIFETSIQVGSNACNRPTNPNGDCSHFCFPVPNLQRVCGCPYGMRLASNRLNCVNDSSREPPMEQCGALSFPCNNGRCVPLHYRCDGVDDCHDNSDEVQCGAFNTSCAPSAFACGHGGGECIPSYWRCDNHNDCVDGSDEQNCSSQAQTSCRADYFTCDNHMCIPKNWLCDTDNDCGDGSDEKRCDLGETCSPTQFHCPNHRCIDLAFVCDGDKDCADGSDESACVINCTDSQFKCVGSNKCISNTYRCDGVSDCSDHSDEIDCPTRPPGMCRQDEFQCREDGICIPDSWECDGHPDCLTGSDEHSGCPPRTCPXSRFLCANGNCIFRDWLCDGDNDCRDMSDEKDCPTQPFLCPSWQWQCPGHSICVNLSSVCDGISDCPHGTDESPLCNQESCLHSNGGCTHLCIQGPFGAQCECPLGYRLANDSKTCEDIDECRIPGFCSQHCYNMRGSFRCWCDIEYSLEADQRTCKATASESLLLVVANQNQLIADNITKSMDHMRALIQDGSHIVAVDFDSVRGRIFWSDKTLGKIFSAFQNGTDRKPVFNSGNIMTESIAVDWVGRNLYWADFALETIEVSKLDGTLRTVLLSENVTSPRGIVLDPRVNDRVIFWTNWGSYPRIERASMDGEMRTVIVQQKIFWPNGLAIDYPTRLLYFADGNLDHIHFCKYDGSNRKQVISSGEGSGHLFAITIFEDSIYWTDRNSQDVRKANKWHGGNESVVLSASQPLGIVAVHPARQPTARNPCTIARCSHLCLLSSERLYSCACPSGWSLSQDSMTCVRDDDAFLIVVRRTTIFGISLNPEVNTDNAMVPISGMESGYDVEVDYSEQFLYYADYPGEIYKVKTDGTNRTLFDPLTKVGSTTTLALDWLSRNLYYTDSEARSIKVLTLRGNVRYRKTLITNDGTTLGIGVPVSITVDPAKGKLYWSDLGIEGRVPAKIACANMDGTSRKNLFTGHLENVGFITLDIQEQKLYWTVRSYISIERGNVDGTDRMSLVNSLPRPRGIAVYGPYLYYADEQNQVIERVDKATGANKVVVREGLPNLRALRIYRRRGSESSNGCSNNINACQQICLPVPGGLFTCACAVGFKLNPDNRTCSSHDSFIVVSMLTAIRGYSLDVSDHSEAMVPVELEGQNTLHVDVDVSSGFVYWADFNRNVQTDNAIRRIKIDGSGFADIITDGIGKDGIRGIAVDWVAGNLYFINAFVSETLIEVLRINTTHRRVLLKTTEDVPRDIVVDPKNRYLFWSDIGQTPKIERSFLDCTNRTVLVSEMVASPRGLALDHNSGYIYWVDDSLDLIARVSIHGGNSETIRFGSSYPTPYAIAVFGNSIIWVDRDLKTIFQASKEPFKTDPPTVIRNNINWLRDVTVFDKQAQPRSPAEVNYNPCLQNNGGCTHFCFALPQLRTPKCGCAFGVLQGDGRSCAISREDFLIYALDNSVRSLHFDPEDYNVPFTAISVEETAVAVDYDSIDNRIYFTQVLASGKGQISYISLNSRSHSPTVVISNLGSPDGIAFDWIGRRIYYSDYTNQTIQSMNMDGSRRTVVARVTKPRAIVLDPCQGYMYWTDWSTNAQIERATMAGNFRNSIVNRDLVWPNGLTLDYKENLLYWADASLQKIERSSVTGTGREVIVSRANAPFGLTVYGQYIYWTDWLTQKIYRANKYDGSGQTAMTTALPFLPNGIRAVVNNQELCHNPCGRFNGGCSHVCAPGPNGPECKCPHEGRWYLANNNKYCIVDDGKRCNSTQFTCLSGYCILESLKCNDIDECGDSSDELETLCAYHTCPPTSFTCANGRCIQRHFRCDHYNDCGDNSDESGCRFRSCNITTEFSCNNGKCLPLQLVCDGIDHCNDNNTSDEKNCAQHTCLPDYIKCANSNVCIPRLFLCDGDNDCGDMSDENPIYCVSPTCKNNEFQCTSGSCIPELWHCDGERDCDDGSDEPATCVYSPSTCSSDEFKCDNNRCIQMEWICDGDNDCGDMSDEDGRHHCENHNCSSYAFHCVNSAPPSRRCIPLSWVCDGDADCSDAYDEHQNCTRRNCSGTEFRCSNGLCIPNWFRCDRRNDCGDYSDERNCKYPACDENLFTCQNGICTYKSYICDGENDCGDNSDELEHLCHKEETTCPPHQFRCNNGNCIEMVKVCNHQADCSDNSDEERCGVNECNDPLLSGCDQNCTDTLTSFYCSCKPGYRLLPDKRTCVDIDECKETPSVCSQKCENLLGSYICKCAPGYTREPDGRSCRQNTNIEPYLIFSNRYYLRNLTIDGHIYSLILQGLGNAVALDFDRVEERLYWLDIENKVIERMFLNKTNREAVIKYNIPGTESLAVDWVTRKLYWSDSYLNCLSVSDLNGRYRRKLAEHCVDVNNTFCFDKPRGIALHPRYGYVYWADWTDRAYIGRVGMDGRNKSLIISSKIKWPNGITIDYTNDLLYWTDAHLGYIEYSDLEGSHRHTVYETGTLSHPFAVTIFEDTIYWTDWNTKTVEKGNKYNGSNREVLVNTTHRPYDIHVYHPYRQPFVSNPCGTNNGGCSHLCLIKAGGNGFTCECPDNFYTIQHGDTTQCLPMCSSTQFLCANNEMCIPIWWKCDGQKDCLDGSDEPNTCPQRFCRLGQFQCSDGNCTSSNFICNARQDCPDGSDEDAVLCEHHRCESNQWQCANKRCIPESWQCDSLNDCGDNSDEDSSHCARRTCLPGYFKCANGHCIPQSWKCDVDNDCGDYSDEPLQECMGPAYRCDNYTEFDCKTNYRCIPKWAVCNGFDDCRDNSDEQNCESLTCKPSGEFRCTNHHCIPLRWRCDGHNDCGDNSDEENCVPRQCSESEFRCDDQTCIPSRWICDQNNDCGDNSDERDCEVMTCHPGYFQCSSGHCIPDQMRCDGFADCLDASDEATCPTRFPNGAYCPATLFECKNHVCVQPSWKCDGDNDCGDGSDEELHLCLNITCDLTNRFRCDNNRCIYRHELCNHEDDCGDGSDEKKENCLAPTPRPCTEGEFKCSNGHCISQHLVCDDVDDCGDHFDETGCNTGEERSCAENLCEHNCTQLIGGGFICSCRPGFKASSLNRNSCEDINECEQFGVCPQNCHNTKGSYECTCAEGFRSMSEHYGERCAAEGNPPLLLLPENVRVRKYNLSSEKFSDYLEDQERIQALDYDWDPEGTGLSVVYYTVLGHGSKFGAIKRAYIPNFESGSNNPVKEVNLGLKYIVQPDGIAVDWVGRHIYWSDAKTQRIEVAELDGRYRKWLITTLLDQPAAIVVNPKQGLMYWTDWGKNPKIEIAWMDGQHRKVLVQEDLGWPTGLSIDYVNSDRIYWSDLKEDVIETIKHDGTDRKVVVTAAMNPYSLDIFESQLYWISKDKGEIWVQDKFERDRKEKLLIVNPWLTQVRIFHQRRYNQSVPNRCKKVCSHLCLLKPEGYTCACPQGSRFIAGSVTECDAAIESPVTMPPPCRCMNEGNCYFDKNNLPKCKCPSGYMGEYCEIGLSKGISPGTTVAVLVTLILIIIIGGLVALGFFHYRKTGSILISMPRLPSLSNLSKYTENGNGVTFRSGEDVNMDIGVSGFGPESAIDRSMAMSEHFAMDLEKPPIIFENPMYTSKDGTIRMAQPTTTQVSESGNVYNKNYGSPVNPDELAPDTKPASPSADETQVTKWNIFKRKPKQNTNFENPIYAETENEPKVGAAVTPPPSPSPPAKKTQKKGTTPAYSATEDTFKDTANLVREDSEA.

The signal sequence occupies residues 1 to 25 (MERWAAAAACTLLLAFAACLAPASG). The Extracellular segment spans residues 26 to 4422 (RECLGNEFRC…SKGISPGTTV (4397 aa)). 7 LDL-receptor class A domains span residues 27–63 (ECLG…IGCP), 66–104 (TCGS…QRCP), 108–144 (TCSS…INCR), 142–181 (NCRY…LNCT), 183–219 (RCLR…HSCS), 223–259 (PCKG…DGCE), and 267–308 (ECYP…RVCD). Disulfide bonds link cysteine 28-cysteine 40, cysteine 35-cysteine 53, cysteine 47-cysteine 62, cysteine 67-cysteine 80, cysteine 74-cysteine 93, cysteine 87-cysteine 103, cysteine 109-cysteine 121, cysteine 116-cysteine 134, cysteine 128-cysteine 143, cysteine 143-cysteine 158, cysteine 153-cysteine 171, cysteine 165-cysteine 180, cysteine 184-cysteine 196, cysteine 191-cysteine 209, cysteine 203-cysteine 218, cysteine 224-cysteine 236, cysteine 231-cysteine 249, cysteine 243-cysteine 258, cysteine 268-cysteine 281, cysteine 275-cysteine 294, and cysteine 288-cysteine 307. Asparagine 160 and asparagine 179 each carry an N-linked (GlcNAc...) asparagine glycan. The N-linked (GlcNAc...) asparagine glycan is linked to asparagine 341. Residues 348–386 (DFNDCQIWGICDHFCEDRIGHHQCFCAEGYVLEHEQHCR) form the EGF-like 1; calcium-binding domain. 3 cysteine pairs are disulfide-bonded: cysteine 352–cysteine 362, cysteine 358–cysteine 371, and cysteine 373–cysteine 385. Residue asparagine 388 is glycosylated (N-linked (GlcNAc...) asparagine). LDL-receptor class B repeat units lie at residues 436-478 (SKVF…DWIN), 479-521 (NKLY…DPTV), 522-568 (GYLF…DLVA), 569-613 (KRVY…FEDN), 753-795 (NAIF…DWIS), 796-837 (RNLY…HPIA), 838-881 (GYIF…DWGS), and 882-925 (SRLY…FGEY). The N-linked (GlcNAc...) asparagine glycan is linked to asparagine 771. Asparagine 866 carries an N-linked (GlcNAc...) asparagine glycan. An N-linked (GlcNAc...) asparagine glycan is attached at asparagine 1015. In terms of domain architecture, LDL-receptor class A 8 spans 1025–1061 (QCGALSFPCNNGRCVPLHYRCDGVDDCHDNSDEVQCG). 3 disulfides stabilise this stretch: cysteine 1026–cysteine 1038, cysteine 1033–cysteine 1051, and cysteine 1045–cysteine 1060. An N-linked (GlcNAc...) asparagine glycan is attached at asparagine 1064. LDL-receptor class A domains lie at 1066–1104 (SCAP…QNCS), 1110–1146 (SCRA…KRCD), 1150–1186 (TCSP…SACV), 1188–1225 (NCTD…IDCP), 1231–1269 (MCRQ…SGCP), 1272–1308 (TCPX…KDCP), and 1313–1351 (LCPS…PLCN). 9 disulfide bridges follow: cysteine 1067-cysteine 1081, cysteine 1074-cysteine 1094, cysteine 1088-cysteine 1103, cysteine 1111-cysteine 1123, cysteine 1118-cysteine 1136, cysteine 1130-cysteine 1145, cysteine 1151-cysteine 1163, cysteine 1158-cysteine 1176, and cysteine 1170-cysteine 1185. Asparagine 1102 is a glycosylation site (N-linked (GlcNAc...) asparagine). Ca(2+) is bound by residues tryptophan 1128, aspartate 1131, aspartate 1133, aspartate 1135, aspartate 1141, and glutamate 1142. Asparagine 1188 carries an N-linked (GlcNAc...) asparagine glycan. Intrachain disulfides connect cysteine 1189–cysteine 1202, cysteine 1196–cysteine 1215, cysteine 1209–cysteine 1224, cysteine 1232–cysteine 1245, cysteine 1239–cysteine 1258, cysteine 1252–cysteine 1268, cysteine 1273–cysteine 1285, cysteine 1280–cysteine 1298, cysteine 1292–cysteine 1307, cysteine 1314–cysteine 1327, cysteine 1321–cysteine 1340, and cysteine 1334–cysteine 1350. Positions 1207, 1210, 1212, 1214, 1220, and 1221 each coordinate Ca(2+). A glycan (N-linked (GlcNAc...) asparagine) is linked at asparagine 1329. Residues asparagine 1385, asparagine 1452, asparagine 1498, and asparagine 1552 are each glycosylated (N-linked (GlcNAc...) asparagine). 10 LDL-receptor class B repeats span residues 1480–1522 (GRIF…DWVG), 1523–1565 (RNLY…DPRV), 1568–1611 (RVIF…DYPT), 1612–1654 (RLLY…TIFE), 1655–1696 (DSIY…VHPA), 1789–1831 (QFLY…DWLS), 1832–1881 (RNLY…DPAK), 1882–1929 (GKLY…DIQE), 1930–1971 (QKLY…YGPY), and 1972–2012 (LYYA…YRRR). 2 N-linked (GlcNAc...) asparagine glycosylation sites follow: asparagine 1677 and asparagine 1809. N-linked (GlcNAc...) asparagine glycosylation is present at asparagine 2053. LDL-receptor class B repeat units lie at residues 2105 to 2154 (GFVY…DWVA), 2155 to 2199 (GNLY…DPKN), 2200 to 2243 (RYLF…DHNS), 2244 to 2287 (GYIY…FGNS), 2429 to 2475 (NRIY…DWIG), 2476 to 2516 (RRIY…DPCQ), 2517 to 2560 (GYMY…DYKE), 2561 to 2602 (NLLY…YGQY), and 2603 to 2644 (IYWT…VVNN). Residues asparagine 2175 and asparagine 2222 are each glycosylated (N-linked (GlcNAc...) asparagine). Asparagine 2485 carries an N-linked (GlcNAc...) asparagine glycan. LDL-receptor class A domains lie at 2696–2734 (RCNS…TLCA), 2737–2773 (TCPP…SGCR), 2776–2815 (SCNI…KNCA), 2818–2857 (TCLP…IYCV), 2860–2897 (TCKN…ATCV), 2902–2941 (TCSS…HHCE), 2944–2986 (NCSS…QNCT), 2989–3025 (NCSG…RNCK), 3028–3066 (ACDE…HLCH), and 3071–3107 (TCPP…ERCG). Intrachain disulfides connect cysteine 2697-cysteine 2709, cysteine 2704-cysteine 2722, cysteine 2716-cysteine 2733, cysteine 2738-cysteine 2750, cysteine 2745-cysteine 2763, cysteine 2757-cysteine 2772, cysteine 2777-cysteine 2790, cysteine 2785-cysteine 2803, cysteine 2797-cysteine 2814, cysteine 2819-cysteine 2832, cysteine 2826-cysteine 2845, cysteine 2839-cysteine 2856, cysteine 2861-cysteine 2873, cysteine 2868-cysteine 2886, cysteine 2880-cysteine 2896, cysteine 2903-cysteine 2915, cysteine 2910-cysteine 2928, and cysteine 2922-cysteine 2940. Asparagine 2698 is a glycosylation site (N-linked (GlcNAc...) asparagine). N-linked (GlcNAc...) asparagine glycosylation occurs at asparagine 2778. Residues asparagine 2806 and asparagine 2807 are each glycosylated (N-linked (GlcNAc...) asparagine). An N-linked (GlcNAc...) asparagine glycan is attached at asparagine 2944. 3 cysteine pairs are disulfide-bonded: cysteine 2945/cysteine 2962, cysteine 2952/cysteine 2975, and cysteine 2969/cysteine 2985. N-linked (GlcNAc...) asparagine glycans are attached at residues asparagine 2984 and asparagine 2989. Disulfide bonds link cysteine 2990-cysteine 3002, cysteine 2997-cysteine 3015, cysteine 3009-cysteine 3024, cysteine 3029-cysteine 3041, cysteine 3036-cysteine 3054, cysteine 3048-cysteine 3065, cysteine 3072-cysteine 3084, cysteine 3079-cysteine 3097, and cysteine 3091-cysteine 3106. The N-linked (GlcNAc...) asparagine glycan is linked to asparagine 3122. An EGF-like 2; calcium-binding domain is found at 3149–3189 (DIDECKETPSVCSQKCENLLGSYICKCAPGYTREPDGRSCR). Intrachain disulfides connect cysteine 3153-cysteine 3164, cysteine 3160-cysteine 3173, and cysteine 3175-cysteine 3188. N-linked (GlcNAc...) asparagine glycosylation is found at asparagine 3208, asparagine 3254, asparagine 3312, and asparagine 3352. LDL-receptor class B repeat units lie at residues 3236 to 3278 (ERLY…DWVT), 3279 to 3321 (RKLY…DKPR), 3330 to 3373 (GYVY…DYTN), 3374 to 3417 (DLLY…FEDT), and 3418 to 3458 (IYWT…YHPY). Residues asparagine 3435 and asparagine 3444 are each glycosylated (N-linked (GlcNAc...) asparagine). 9 LDL-receptor class A domains span residues 3509–3547 (MCSS…NTCP), 3550–3588 (FCRL…VLCE), 3591–3629 (RCES…SHCA), 3632–3670 (TCLP…QECM), 3675–3713 (RCDN…QNCE), 3716–3753 (TCKP…ENCV), 3756–3792 (QCSE…RDCE), 3795–3831 (TCHP…ATCP), and 3839–3877 (YCPA…HLCL). Cystine bridges form between cysteine 3510/cysteine 3523, cysteine 3517/cysteine 3536, cysteine 3530/cysteine 3546, cysteine 3551/cysteine 3563, cysteine 3558/cysteine 3576, cysteine 3570/cysteine 3587, cysteine 3592/cysteine 3604, cysteine 3599/cysteine 3617, cysteine 3611/cysteine 3628, cysteine 3633/cysteine 3645, cysteine 3640/cysteine 3658, cysteine 3652/cysteine 3669, cysteine 3676/cysteine 3690, cysteine 3684/cysteine 3703, cysteine 3697/cysteine 3712, cysteine 3717/cysteine 3730, cysteine 3725/cysteine 3743, cysteine 3737/cysteine 3752, cysteine 3757/cysteine 3769, cysteine 3764/cysteine 3782, cysteine 3776/cysteine 3791, cysteine 3796/cysteine 3808, cysteine 3803/cysteine 3821, cysteine 3815/cysteine 3830, cysteine 3840/cysteine 3852, cysteine 3847/cysteine 3865, and cysteine 3859/cysteine 3876. Residue asparagine 3562 is glycosylated (N-linked (GlcNAc...) asparagine). A glycan (N-linked (GlcNAc...) asparagine) is linked at asparagine 3678. Residue asparagine 3878 is glycosylated (N-linked (GlcNAc...) asparagine). LDL-receptor class A domains are found at residues 3880 to 3919 (TCDL…ENCL) and 3925 to 3961 (PCTE…TGCN). 12 disulfides stabilise this stretch: cysteine 3881-cysteine 3894, cysteine 3889-cysteine 3907, cysteine 3901-cysteine 3918, cysteine 3926-cysteine 3938, cysteine 3933-cysteine 3951, cysteine 3945-cysteine 3960, cysteine 3968-cysteine 3977, cysteine 3973-cysteine 3987, cysteine 3989-cysteine 4003, cysteine 4009-cysteine 4019, cysteine 4015-cysteine 4028, and cysteine 4030-cysteine 4045. The EGF-like 3 domain occupies 3964 to 4004 (EERSCAENLCEHNCTQLIGGGFICSCRPGFKASSLNRNSCE). Residue asparagine 3976 is glycosylated (N-linked (GlcNAc...) asparagine). The EGF-like 4; calcium-binding domain occupies 4005–4046 (DINECEQFGVCPQNCHNTKGSYECTCAEGFRSMSEHYGERCA). A glycan (N-linked (GlcNAc...) asparagine) is linked at asparagine 4066. 3 LDL-receptor class B repeats span residues 4152-4194 (RHIY…NPKQ), 4195-4238 (GLMY…DYVN), and 4240-4281 (DRIY…FESQ). A glycan (N-linked (GlcNAc...) asparagine) is linked at asparagine 4325. Positions 4375–4409 (MPPPCRCMNEGNCYFDKNNLPKCKCPSGYMGEYCE) constitute an EGF-like 5 domain. 3 disulfide bridges follow: cysteine 4379–cysteine 4387, cysteine 4381–cysteine 4397, and cysteine 4399–cysteine 4408. A helical membrane pass occupies residues 4423 to 4443 (AVLVTLILIIIIGGLVALGFF). Residues 4444 to 4652 (HYRKTGSILI…ANLVREDSEA (209 aa)) lie on the Cytoplasmic side of the membrane. An SH3-binding motif is present at residues 4450–4459 (SILISMPRLP). The PxLPxI/L motif 1; mediates interaction with ANKRA2 motif lies at 4453-4458 (ISMPRL). The PxLPxI/L motif 2; mediates interaction with ANKRA2 signature appears at 4456–4461 (PRLPSL). Serine 4460 is subject to Phosphoserine. The Endocytosis signal signature appears at 4518–4523 (FENPMY). The span at 4536 to 4553 (TTTQVSESGNVYNKNYGS) shows a compositional bias: polar residues. Residues 4536–4652 (TTTQVSESGN…ANLVREDSEA (117 aa)) are disordered. Position 4568 is a phosphoserine (serine 4568). The tract at residues 4588-4601 (QNTNFENPIYAETE) is interaction with DAB2. Residues 4594 to 4597 (NPIY) carry the NPXY motif motif. The SH2-binding motif lies at 4597–4600 (YAET). The short motif at 4610 to 4621 (VTPPPSPSPPAK) is the SH3-binding element. Residue serine 4615 is modified to Phosphoserine. The span at 4626–4636 (KGTTPAYSATE) shows a compositional bias: polar residues. Threonine 4629 is modified (phosphothreonine). Residue serine 4650 is modified to Phosphoserine.

This sequence belongs to the LDLR family. As to quaternary structure, binds plasminogen, extracellular matrix components, plasminogen activator-plasminogen activator inhibitor type I complex, apolipoprotein E-enriched beta-VLDL, lipoprotein lipase, lactoferrin, CLU/clusterin and calcium. Forms a multimeric complex together with LRPAP1. Interacts (via PxLPxI/L motif) with ANKRA2 (via ankyrin repeats). Interacts with LRP2BP. Interacts (via NPXY motif) with DAB2; the interaction is not affected by tyrosine phosphorylation of the NPXY motif. Interacts with MB. Interacts with BMP4. Interacts with the Sonic hedgehog protein N-product which is the active product of SHH. Interacts with CST3 in a calcium-dependent manner. Interacts with the vitamin-D binding protein GC/DBP. Interacts with sex hormone-binding protein SHBG. Interacts with angiotensin-2. Also interacts with angiotensin 1-7. Interacts with APOM. Interacts with selenoprotein SEPP1. Interacts with LEP. Interacts with ALB. Interacts with the antiapoptotic protein BIRC5/survivin. Interacts with matrix metalloproteinase MMP2 in complex with metalloproteinase inhibitor TIMP1. In neurons, forms a trimeric complex with APP and APPB1/FE65. Interacts with LDLRAP1/ARH; mediates trafficking of LRP2 to the endocytic recycling compartment. Does not interact with beta-amyloid protein 40 alone but interacts with the complex composed of beta-amyloid protein 40 and CLU/APOJ. Interacts with MDK. A fraction undergoes proteolytic cleavage of the extracellular domain at the cell membrane to generate a cytoplasmic tail fragment. This is internalized into the early endosome from where it trafficks in an LDLRAP1/ARH-dependent manner to the endocytic recycling compartment (ERC). In the ERC, it is further cleaved by gamma-secretase to release a fragment which translocates to the nucleus and mediates transcriptional repression. In terms of processing, N-glycosylation is required for ligand binding.

Its subcellular location is the apical cell membrane. It is found in the endosome lumen. The protein resides in the membrane. It localises to the clathrin-coated pit. The protein localises to the cell projection. Its subcellular location is the dendrite. It is found in the axon. Multiligand endocytic receptor. Acts together with CUBN to mediate endocytosis of high-density lipoproteins. Mediates receptor-mediated uptake of polybasic drugs such as aprotinin, aminoglycosides and polymyxin B. In the kidney, mediates the tubular uptake and clearance of leptin. Also mediates transport of leptin across the blood-brain barrier through endocytosis at the choroid plexus epithelium. Endocytosis of leptin in neuronal cells is required for hypothalamic leptin signaling and leptin-mediated regulation of feeding and body weight. Mediates endocytosis and subsequent lysosomal degradation of CST3 in kidney proximal tubule cells. Mediates renal uptake of 25-hydroxyvitamin D3 in complex with the vitamin D3 transporter GC/DBP. Mediates renal uptake of metallothionein-bound heavy metals. Together with CUBN, mediates renal reabsorption of myoglobin. Mediates renal uptake and subsequent lysosomal degradation of APOM. Plays a role in kidney selenium homeostasis by mediating renal endocytosis of selenoprotein SEPP1. Mediates renal uptake of the antiapoptotic protein BIRC5/survivin which may be important for functional integrity of the kidney. Mediates renal uptake of matrix metalloproteinase MMP2 in complex with metalloproteinase inhibitor TIMP1. Mediates endocytosis of Sonic hedgehog protein N-product (ShhN), the active product of SHH. Also mediates ShhN transcytosis. In the embryonic neuroepithelium, mediates endocytic uptake and degradation of BMP4, is required for correct SHH localization in the ventral neural tube and plays a role in patterning of the ventral telencephalon. Required at the onset of neurulation to sequester SHH on the apical surface of neuroepithelial cells of the rostral diencephalon ventral midline and to control PTCH1-dependent uptake and intracellular trafficking of SHH. During neurulation, required in neuroepithelial cells for uptake of folate bound to the folate receptor FOLR1 which is necessary for neural tube closure. In the adult brain, negatively regulates BMP signaling in the subependymal zone which enables neurogenesis to proceed. In astrocytes, mediates endocytosis of ALB which is required for the synthesis of the neurotrophic factor oleic acid. Involved in neurite branching. During optic nerve development, required for SHH-mediated migration and proliferation of oligodendrocyte precursor cells. Mediates endocytic uptake and clearance of SHH in the retinal margin which protects retinal progenitor cells from mitogenic stimuli and keeps them quiescent. Plays a role in reproductive organ development by mediating uptake in reproductive tissues of androgen and estrogen bound to the sex hormone binding protein SHBG. Mediates endocytosis of angiotensin-2. Also mediates endocytosis of angiotensis 1-7. Binds to the complex composed of beta-amyloid protein 40 and CLU/APOJ and mediates its endocytosis and lysosomal degradation. Required for embryonic heart development. Required for normal hearing, possibly through interaction with estrogen in the inner ear. The polypeptide is Low-density lipoprotein receptor-related protein 2 (Sus scrofa (Pig)).